Here is an 84-residue protein sequence, read N- to C-terminus: Exodeoxyribonuclease 7 small subunit (84 aa).

Belongs to the XseB family. As to quaternary structure, heterooligomer composed of large and small subunits.

The protein localises to the cytoplasm. The enzyme catalyses Exonucleolytic cleavage in either 5'- to 3'- or 3'- to 5'-direction to yield nucleoside 5'-phosphates.. In terms of biological role, bidirectionally degrades single-stranded DNA into large acid-insoluble oligonucleotides, which are then degraded further into small acid-soluble oligonucleotides. The chain is Exodeoxyribonuclease 7 small subunit from Bartonella henselae (strain ATCC 49882 / DSM 28221 / CCUG 30454 / Houston 1) (Rochalimaea henselae).